The primary structure comprises 98 residues: Elicitin Vex1 (98 aa).

Intrachain disulfides connect Cys-3–Cys-71, Cys-27–Cys-56, and Cys-51–Cys-95. Asn-92 is a glycosylation site (N-linked (GlcNAc...) asparagine).

It belongs to the elicitin family.

Its subcellular location is the secreted. Functionally, induces local and distal defense responses (incompatible hypersensitive reaction) in plants from the solanaceae and cruciferae families. Elicits leaf necrosis and causes the accumulation of pathogenesis-related proteins. Might interact with the lipidic molecules of the plasma membrane. The protein is Elicitin Vex1 of Phytopythium vexans (Damping-off fungus).